Here is a 179-residue protein sequence, read N- to C-terminus: Isopentenyl-diphosphate Delta-isomerase (179 aa).

Residues H25 and H31 each contribute to the Mn(2+) site. Residues 29–161 (ELHRAITVYI…PEQFTAWFQL (133 aa)) enclose the Nudix hydrolase domain. Residue C66 is part of the active site. C66 is a binding site for Mg(2+). Residue H68 coordinates Mn(2+). E86 is a binding site for Mg(2+). Residues E111 and E113 each coordinate Mn(2+). The active site involves E113.

It belongs to the IPP isomerase type 1 family. Homodimer. The cofactor is Mg(2+). Mn(2+) serves as cofactor.

It localises to the cytoplasm. It carries out the reaction isopentenyl diphosphate = dimethylallyl diphosphate. It functions in the pathway isoprenoid biosynthesis; dimethylallyl diphosphate biosynthesis; dimethylallyl diphosphate from isopentenyl diphosphate: step 1/1. Functionally, catalyzes the 1,3-allylic rearrangement of the homoallylic substrate isopentenyl (IPP) to its highly electrophilic allylic isomer, dimethylallyl diphosphate (DMAPP). The polypeptide is Isopentenyl-diphosphate Delta-isomerase (Pectobacterium atrosepticum (strain SCRI 1043 / ATCC BAA-672) (Erwinia carotovora subsp. atroseptica)).